We begin with the raw amino-acid sequence, 276 residues long: Elongation factor Ts (276 aa).

The segment at 79 to 82 (TDFV) is involved in Mg(2+) ion dislocation from EF-Tu.

This sequence belongs to the EF-Ts family.

Its subcellular location is the cytoplasm. Functionally, associates with the EF-Tu.GDP complex and induces the exchange of GDP to GTP. It remains bound to the aminoacyl-tRNA.EF-Tu.GTP complex up to the GTP hydrolysis stage on the ribosome. The protein is Elongation factor Ts of Buchnera aphidicola subsp. Cinara cedri (strain Cc).